We begin with the raw amino-acid sequence, 849 residues long: Membrane protein-large ribosomal subunit bL9 fusion protein (849 aa).

The segment at 1–680 is unknown; the sequence is MFSKNKHNTK…TQLEGTNIKT (680 aa). The next 2 membrane-spanning stretches (helical) occupy residues 11–31 and 64–84; these read FIVI…FDFQ and IIFF…IISF. Positions 214-342 constitute a GGDEF domain; the sequence is KTLAIAMIAF…GGDQVVVNIE (129 aa). Positions 681-849 are large ribosomal subunit protein bL9; that stretch reads VTDTLKHFLK…FLNVTERKSK (169 aa).

The protein belongs to the bacterial ribosomal protein bL9 family.

The protein resides in the cell membrane. Functionally, binds to the 23S rRNA. This Aster yellows witches'-broom phytoplasma (strain AYWB) protein is Membrane protein-large ribosomal subunit bL9 fusion protein.